A 197-amino-acid polypeptide reads, in one-letter code: UPF0637 protein LEUM_0496 (197 aa).

The protein belongs to the UPF0637 family.

In Leuconostoc mesenteroides subsp. mesenteroides (strain ATCC 8293 / DSM 20343 / BCRC 11652 / CCM 1803 / JCM 6124 / NCDO 523 / NBRC 100496 / NCIMB 8023 / NCTC 12954 / NRRL B-1118 / 37Y), this protein is UPF0637 protein LEUM_0496.